Consider the following 365-residue polypeptide: Glial fibrillary acidic protein (365 aa).

A head region spans residues 1-5 (REVDR). Positions 2–310 (EVDRVMGLND…KLLEGEESRI (309 aa)) constitute an IF rod domain. A coil 1A region spans residues 6 to 37 (VMGLNDRFASYIEKVRFLEQQNKMLVAELNQL). The linker 1 stretch occupies residues 38-48 (RGKEPSRLGDI). A coil 1B region spans residues 49–147 (YQEELRELRR…EEEMRQLQEQ (99 aa)). The interval 148–163 (LIAQQVHVDLDVSKPD) is linker 12. The tract at residues 164 to 185 (LTTALKEIRAQFEAMATSNMQE) is coil 2A. Positions 186-189 (TEEW) are linker 2. The tract at residues 190 to 310 (YRSKFADLTD…KLLEGEESRI (121 aa)) is coil 2B. The tail stretch occupies residues 311 to 365 (TVPVQNFTNLQFRDTSLDTKLTPEAHVKRSIVVRTVETRDGEIIKESTTERKDLP).

It belongs to the intermediate filament family.

The chain is Glial fibrillary acidic protein (gfap) from Carassius auratus (Goldfish).